Reading from the N-terminus, the 31-residue chain is Photosystem II reaction center protein T (31 aa).

A helical transmembrane segment spans residues 3–23 (ALVYTFLLVGTLGIIFFSIFF).

Belongs to the PsbT family. In terms of assembly, PSII is composed of 1 copy each of membrane proteins PsbA, PsbB, PsbC, PsbD, PsbE, PsbF, PsbH, PsbI, PsbJ, PsbK, PsbL, PsbM, PsbT, PsbY, PsbZ, Psb30/Ycf12, at least 3 peripheral proteins of the oxygen-evolving complex and a large number of cofactors. It forms dimeric complexes.

It localises to the plastid. The protein localises to the chloroplast thylakoid membrane. In terms of biological role, found at the monomer-monomer interface of the photosystem II (PS II) dimer, plays a role in assembly and dimerization of PSII. PSII is a light-driven water plastoquinone oxidoreductase, using light energy to abstract electrons from H(2)O, generating a proton gradient subsequently used for ATP formation. The polypeptide is Photosystem II reaction center protein T (Tupiella akineta (Green alga)).